The primary structure comprises 162 residues: 6,7-dimethyl-8-ribityllumazine synthase (162 aa).

5-amino-6-(D-ribitylamino)uracil contacts are provided by residues Phe-22, 56-58, and 80-82; these read TFE and AVI. Position 85–86 (85–86) interacts with (2S)-2-hydroxy-3-oxobutyl phosphate; that stretch reads GT. Catalysis depends on His-88, which acts as the Proton donor. Residue Met-113 coordinates 5-amino-6-(D-ribitylamino)uracil. Residue Arg-127 coordinates (2S)-2-hydroxy-3-oxobutyl phosphate.

Belongs to the DMRL synthase family.

It carries out the reaction (2S)-2-hydroxy-3-oxobutyl phosphate + 5-amino-6-(D-ribitylamino)uracil = 6,7-dimethyl-8-(1-D-ribityl)lumazine + phosphate + 2 H2O + H(+). It participates in cofactor biosynthesis; riboflavin biosynthesis; riboflavin from 2-hydroxy-3-oxobutyl phosphate and 5-amino-6-(D-ribitylamino)uracil: step 1/2. Its function is as follows. Catalyzes the formation of 6,7-dimethyl-8-ribityllumazine by condensation of 5-amino-6-(D-ribitylamino)uracil with 3,4-dihydroxy-2-butanone 4-phosphate. This is the penultimate step in the biosynthesis of riboflavin. This is 6,7-dimethyl-8-ribityllumazine synthase from Anaeromyxobacter dehalogenans (strain 2CP-C).